The chain runs to 820 residues: 1,4-alpha-glucan-branching enzyme, chloroplastic/amyloplastic (820 aa).

A compositionally biased stretch (low complexity) spans Met1–Ala20. The tract at residues Met1–Ala28 is disordered. Residues Met1 to Lys64 constitute a chloroplast transit peptide. The (1,4-alpha-D-glucosyl)n site is built by Trp153 and Lys188. Catalysis depends on Asp409, which acts as the Nucleophile. Glu464 acts as the Proton donor in catalysis.

It belongs to the glycosyl hydrolase 13 family. GlgB subfamily. As to quaternary structure, monomer.

The protein localises to the plastid. It is found in the chloroplast. The protein resides in the amyloplast. It carries out the reaction Transfers a segment of a (1-&gt;4)-alpha-D-glucan chain to a primary hydroxy group in a similar glucan chain.. It participates in glycan biosynthesis; starch biosynthesis. Its function is as follows. Catalyzes the formation of the alpha-1,6-glucosidic linkages in starch by scission of a 1,4-alpha-linked oligosaccharide from growing alpha-1,4-glucan chains and the subsequent attachment of the oligosaccharide to the alpha-1,6 position. The protein is 1,4-alpha-glucan-branching enzyme, chloroplastic/amyloplastic (SBE1) of Oryza sativa subsp. japonica (Rice).